Consider the following 242-residue polypeptide: 1-(5-phosphoribosyl)-5-[(5-phosphoribosylamino)methylideneamino] imidazole-4-carboxamide isomerase (242 aa).

Asp8 acts as the Proton acceptor in catalysis. The active-site Proton donor is Asp129.

This sequence belongs to the HisA/HisF family.

The protein resides in the cytoplasm. The catalysed reaction is 1-(5-phospho-beta-D-ribosyl)-5-[(5-phospho-beta-D-ribosylamino)methylideneamino]imidazole-4-carboxamide = 5-[(5-phospho-1-deoxy-D-ribulos-1-ylimino)methylamino]-1-(5-phospho-beta-D-ribosyl)imidazole-4-carboxamide. It participates in amino-acid biosynthesis; L-histidine biosynthesis; L-histidine from 5-phospho-alpha-D-ribose 1-diphosphate: step 4/9. This is 1-(5-phosphoribosyl)-5-[(5-phosphoribosylamino)methylideneamino] imidazole-4-carboxamide isomerase from Clostridium botulinum (strain Langeland / NCTC 10281 / Type F).